The chain runs to 147 residues: Hemoglobin subunit beta (147 aa).

At Val-2 the chain carries N-acetylvaline. The region spanning 3–147 is the Globin domain; the sequence is NLSGDEKNAV…VANALAHRYH (145 aa). A Phosphoserine modification is found at Ser-45. Lys-60 is modified (N6-acetyllysine). His-64 serves as a coordination point for heme b. N6-acetyllysine is present on Lys-83. Residue His-93 coordinates heme b. Cys-94 bears the S-nitrosocysteine mark.

It belongs to the globin family. In terms of assembly, heterotetramer of two alpha chains and two beta chains. As to expression, red blood cells.

In terms of biological role, involved in oxygen transport from the lung to the various peripheral tissues. The polypeptide is Hemoglobin subunit beta (HBB) (Vicugna pacos (Alpaca)).